Consider the following 312-residue polypeptide: MNSALFLPIALLLDRLLGEPPRWHPLVGFGRLVKAVERAAYPAAPGAEPVWRMRLRGAAAIALLLAPFTLAAWALARLPLLEIIVPVALLYLAVGARSLAQHAEVVRKALAEGDLQLARERVGWIVSRDTRELDEAGVARATIESVLENGSDAVFAALFWFLVLGAPGAVLYRLANTLDAMWGYKNERYLHFGWAAARFDDMLNYLPARLTALTYLLLGHAAKGWRCWRTQAPTWYSPNAGPVMAAGAGALGVSLGGGARYHGQWKERPPLGCGPTPTHEDIGRAVRLVNRGMWLWAALSLAAAILIGAIHA.

A run of 4 helical transmembrane segments spans residues 61-81, 83-103, 152-172, and 292-312; these read IALL…LPLL, IIVP…AQHA, DAVF…AVLY, and GMWL…AIHA.

This sequence belongs to the CobD/CbiB family.

It is found in the cell membrane. It functions in the pathway cofactor biosynthesis; adenosylcobalamin biosynthesis. In terms of biological role, converts cobyric acid to cobinamide by the addition of aminopropanol on the F carboxylic group. In Chromobacterium violaceum (strain ATCC 12472 / DSM 30191 / JCM 1249 / CCUG 213 / NBRC 12614 / NCIMB 9131 / NCTC 9757 / MK), this protein is Cobalamin biosynthesis protein CobD.